The primary structure comprises 89 residues: Small ribosomal subunit protein uS15 (89 aa).

Belongs to the universal ribosomal protein uS15 family. In terms of assembly, part of the 30S ribosomal subunit. Forms a bridge to the 50S subunit in the 70S ribosome, contacting the 23S rRNA.

One of the primary rRNA binding proteins, it binds directly to 16S rRNA where it helps nucleate assembly of the platform of the 30S subunit by binding and bridging several RNA helices of the 16S rRNA. In terms of biological role, forms an intersubunit bridge (bridge B4) with the 23S rRNA of the 50S subunit in the ribosome. The sequence is that of Small ribosomal subunit protein uS15 from Buchnera aphidicola subsp. Acyrthosiphon pisum (strain 5A).